A 722-amino-acid chain; its full sequence is Bifunctional UDP-N-acetylglucosamine 2-epimerase/N-acetylmannosamine kinase (722 aa).

Residues Arg-19, Ser-23, Arg-113, His-220, and Asn-253 each coordinate UDP. Lys-259, Glu-271, Lys-280, and His-281 together coordinate CMP-N-acetyl-beta-neuraminate. UDP-binding residues include Val-282, Ser-301, Ser-302, Glu-307, and Arg-321. Positions 406–722 are N-acetylmannosamine kinase; sequence TLSALAVDLG…VLDYTTRRIH (317 aa). Asp-413 contacts Mg(2+). An N-acyl-D-mannosamine 6-phosphate is bound at residue Gly-416. ADP is bound by residues Thr-417, Asn-418, and Arg-420. The an N-acyl-D-mannosamine 6-phosphate site is built by Gly-476, Arg-477, Thr-489, Asn-516, Asp-517, and Gly-545. An N-acyl-D-mannosamine is bound by residues Gly-476, Arg-477, Thr-489, Asn-516, and Asp-517. Asp-517 is a catalytic residue. Positions 566 and 569 each coordinate an N-acyl-D-mannosamine. Position 569 (His-569) interacts with an N-acyl-D-mannosamine 6-phosphate. Zn(2+) is bound by residues His-569, Cys-579, Cys-581, and Cys-586. Glu-588 contacts an N-acyl-D-mannosamine 6-phosphate. Glu-588 contacts an N-acyl-D-mannosamine.

The protein in the N-terminal section; belongs to the UDP-N-acetylglucosamine 2-epimerase family. This sequence in the C-terminal section; belongs to the ROK (NagC/XylR) family. As to quaternary structure, homodimer. Homotetramer. Homohexamer. The hexameric form exhibits both enzyme activities, whereas the dimeric form only catalyzes the phosphorylation of N-acyl-D-mannosamine. Phosphorylated. Phosphorylation by PKC activates the UDP-N-acetylglucosamine 2-epimerase activity.

The protein resides in the cytoplasm. Its subcellular location is the cytosol. It catalyses the reaction UDP-N-acetyl-alpha-D-glucosamine + H2O = aldehydo-N-acetyl-D-mannosamine + UDP + H(+). The enzyme catalyses an N-acyl-D-mannosamine + ATP = an N-acyl-D-mannosamine 6-phosphate + ADP + H(+). It participates in amino-sugar metabolism; N-acetylneuraminate biosynthesis. With respect to regulation, the UDP-N-acetylglucosamine 2-epimerase activity, in contrast to the N-acetylmannosamine kinase activity, exhibits allosteric regulation by cytidine monophosphate-N-acetylneuraminic acid (CMP-Neu5Ac), the end product of neuraminic acid biosynthesis. Moreover, the activity is contingent upon the oligomeric state of the enzyme. The monomeric form is inactive, while the dimeric form selectively catalyzes the phosphorylation of N-acetylmannosamine. The hexameric form, on the other hand, demonstrates full proficiency in both enzyme activities. Furthermore, the UDP-N-acetylglucosamine 2-epimerase activity is increased by PKC-mediated phosphorylation. Its function is as follows. Bifunctional enzyme that possesses both UDP-N-acetylglucosamine 2-epimerase and N-acetylmannosamine kinase activities, and serves as the initiator of the biosynthetic pathway leading to the production of N-acetylneuraminic acid (NeuAc), a critical precursor in the synthesis of sialic acids. By catalyzing this pivotal and rate-limiting step in sialic acid biosynthesis, this enzyme assumes a pivotal role in governing the regulation of cell surface sialylation, playing a role in embryonic angiogenesis. Sialic acids represent a category of negatively charged sugars that reside on the surface of cells as terminal components of glycoconjugates and mediate important functions in various cellular processes, including cell adhesion, signal transduction, and cellular recognition. The sequence is that of Bifunctional UDP-N-acetylglucosamine 2-epimerase/N-acetylmannosamine kinase (GNE) from Cricetulus griseus (Chinese hamster).